Consider the following 193-residue polypeptide: NAD(P)H-quinone oxidoreductase subunit I (193 aa).

4Fe-4S ferredoxin-type domains are found at residues 55–84 (GRIH…VDWE) and 95–124 (KHYS…VTEE). [4Fe-4S] cluster contacts are provided by Cys-64, Cys-67, Cys-70, Cys-74, Cys-104, Cys-107, Cys-110, and Cys-114.

It belongs to the complex I 23 kDa subunit family. As to quaternary structure, NDH-1 is composed of at least 11 different subunits. [4Fe-4S] cluster is required as a cofactor.

Its subcellular location is the cellular thylakoid membrane. It catalyses the reaction a plastoquinone + NADH + (n+1) H(+)(in) = a plastoquinol + NAD(+) + n H(+)(out). It carries out the reaction a plastoquinone + NADPH + (n+1) H(+)(in) = a plastoquinol + NADP(+) + n H(+)(out). In terms of biological role, NDH-1 shuttles electrons from an unknown electron donor, via FMN and iron-sulfur (Fe-S) centers, to quinones in the respiratory and/or the photosynthetic chain. The immediate electron acceptor for the enzyme in this species is believed to be plastoquinone. Couples the redox reaction to proton translocation, and thus conserves the redox energy in a proton gradient. The chain is NAD(P)H-quinone oxidoreductase subunit I from Cyanothece sp. (strain PCC 7425 / ATCC 29141).